The chain runs to 333 residues: Flotillin-like protein FloA (333 aa).

The next 2 membrane-spanning stretches (helical) occupy residues Leu-8–Ile-28 and Val-30–Gly-50.

It belongs to the flotillin-like FloA family. Homooligomerizes.

It localises to the cell membrane. The protein resides in the membrane raft. Functionally, found in functional membrane microdomains (FMM) that may be equivalent to eukaryotic membrane rafts. FMMs are highly dynamic and increase in number as cells age. Flotillins are thought to be important factors in membrane fluidity. The sequence is that of Flotillin-like protein FloA from Desulfitobacterium hafniense (strain DSM 10664 / DCB-2).